A 263-amino-acid chain; its full sequence is Nicotinamide riboside transporter PnuC (263 aa).

At 1–40 (MQYGMDSFGLRGIPHQVFIKKKEGKIMSLAWWKRELFGGW) the chain is on the cytoplasmic side. A helical transmembrane segment spans residues 41-61 (THFEAVWLLMFLGIQAVVFVF). Asn-62 is a topological domain (periplasmic). Residues 63–83 (PDSWLASVAAVTGILCVVFVG) form a helical membrane-spanning segment. The Cytoplasmic portion of the chain corresponds to 84–86 (KGK). The chain crosses the membrane as a helical span at residues 87–107 (ISNYLFGLISVSLYAYVSYTF). The Periplasmic segment spans residues 108–109 (KL). The chain crosses the membrane as a helical span at residues 110 to 131 (YGEMMLNLLVYVPVQFVGFAMW). Residue Gln-124 participates in beta-nicotinamide D-riboside binding. At 132-155 (RKHMALGETAETEEVKAKALTVRQ) the chain is on the cytoplasmic side. Residues 156–177 (WLLVVAASVVGTSVYIEWLHHL) form a helical membrane-spanning segment. Residues 178–180 (GSA) are Periplasmic-facing. A helical membrane pass occupies residues 181 to 201 (LPTLDGVTVVVSIVAQVLMIL). Gln-196 lines the beta-nicotinamide D-riboside pocket. The Cytoplasmic segment spans residues 202–205 (RYRE). A helical transmembrane segment spans residues 206-226 (QWALWIVVNILTISLWAVAWF). Trp-210 and Asn-214 together coordinate beta-nicotinamide D-riboside. The Periplasmic segment spans residues 227–232 (KNGETS). Residues 233 to 253 (LPLLLMYVMYLCNSVYGYINW) form a helical membrane-spanning segment. Position 242 (Tyr-242) interacts with beta-nicotinamide D-riboside. Over 254–263 (TKLVKRHSGQ) the chain is Cytoplasmic.

Belongs to the nicotinamide ribonucleoside (NR) uptake permease (TC 4.B.1) family. Homotrimer.

It localises to the cell inner membrane. Its function is as follows. Required for nicotinamide riboside transport across the inner membrane. In Neisseria mucosa (strain ATCC 25996 / DSM 4631 / NCTC 10774 / M26), this protein is Nicotinamide riboside transporter PnuC.